Here is a 446-residue protein sequence, read N- to C-terminus: Tubulin gamma chain (446 aa).

Residue 142 to 148 participates in GTP binding; that stretch reads AGGTGSG.

It belongs to the tubulin family.

It is found in the cytoplasm. The protein localises to the cytoskeleton. It localises to the microtubule organizing center. Its subcellular location is the spindle pole body. In terms of biological role, tubulin is the major constituent of microtubules. The gamma chain is found at microtubule organizing centers (MTOC) such as the spindle poles or the centrosome, suggesting that it is involved in the minus-end nucleation of microtubule assembly. The sequence is that of Tubulin gamma chain (tug1) from Schizosaccharomyces japonicus (Fission yeast).